Reading from the N-terminus, the 508-residue chain is Endo-4-O-sulfatase (508 aa).

The residue at position 84 (Ser84) is a 3-oxoalanine (Ser).

The protein belongs to the sulfatase family. In terms of processing, the conversion to 3-oxoalanine (also known as C-formylglycine, FGly), of a serine or cysteine residue in prokaryotes and of a cysteine residue in eukaryotes, is critical for catalytic activity.

Functionally, endosulfatase involved in the degradation of the glycosaminoglycans (GAGs) chondroitin sulfate (CS) and dermatan sulfate (DS). Efficiently hydrolyzes sulfate groups from a broad range of substrate size, including disaccharide to high molecular weight CS and DS polymers. Has a strict specificity for the 4-O-sulfate groups of galactosamine. GAG-specific sulfatases play a key role in the persistence of the major human gut symbiont B.thetaiotaomicron in the host gastrointestinal tract. The sequence is that of Endo-4-O-sulfatase from Bacteroides thetaiotaomicron (strain ATCC 29148 / DSM 2079 / JCM 5827 / CCUG 10774 / NCTC 10582 / VPI-5482 / E50).